Here is a 248-residue protein sequence, read N- to C-terminus: Ribosomal RNA small subunit methyltransferase J (248 aa).

S-adenosyl-L-methionine is bound by residues arginine 98–aspartate 99, glutamate 114–arginine 115, serine 150–serine 151, and aspartate 168.

It belongs to the methyltransferase superfamily. RsmJ family.

The protein localises to the cytoplasm. It carries out the reaction guanosine(1516) in 16S rRNA + S-adenosyl-L-methionine = N(2)-methylguanosine(1516) in 16S rRNA + S-adenosyl-L-homocysteine + H(+). In terms of biological role, specifically methylates the guanosine in position 1516 of 16S rRNA. This Shewanella baltica (strain OS223) protein is Ribosomal RNA small subunit methyltransferase J.